Consider the following 901-residue polypeptide: HTH-type transcriptional regulator MalT (901 aa).

Residue 39–46 (SPAGYGKT) coordinates ATP. The HTH luxR-type domain occupies 829 to 894 (ELIRTSPLTQ…AAVQHAQKLL (66 aa)). The segment at residues 853–872 (NEQIAGELEVAATTIKTHIR) is a DNA-binding region (H-T-H motif).

The protein belongs to the MalT family. Monomer in solution. Oligomerizes to an active state in the presence of the positive effectors ATP and maltotriose.

Activated by ATP and maltotriose, which are both required for DNA binding. Its function is as follows. Positively regulates the transcription of the maltose regulon whose gene products are responsible for uptake and catabolism of malto-oligosaccharides. Specifically binds to the promoter region of its target genes, recognizing a short DNA motif called the MalT box. This Escherichia coli O127:H6 (strain E2348/69 / EPEC) protein is HTH-type transcriptional regulator MalT.